The sequence spans 131 residues: C-type natriuretic peptide 2 (131 aa).

Residues 1-22 form the signal peptide; that stretch reads MLYPALLCAALLLIAPLGHTEG. Positions 23–109 are excised as a propeptide; it reads RTLYPSPDAI…KRAVTDRSRR (87 aa). Residues cysteine 115 and cysteine 131 are joined by a disulfide bond.

Belongs to the natriuretic peptide family. In terms of tissue distribution, expressed in brain and to a low extent in atrium.

The protein localises to the secreted. Its function is as follows. Exhibits natriuretic and vasodepressor activity. Has a cGMP-stimulating activity. This Oncorhynchus mykiss (Rainbow trout) protein is C-type natriuretic peptide 2.